We begin with the raw amino-acid sequence, 249 residues long: Proteasome subunit alpha (249 aa).

The protein belongs to the peptidase T1A family. The 20S proteasome core is composed of 14 alpha and 14 beta subunits that assemble into four stacked heptameric rings, resulting in a barrel-shaped structure. The two inner rings, each composed of seven catalytic beta subunits, are sandwiched by two outer rings, each composed of seven alpha subunits. The catalytic chamber with the active sites is on the inside of the barrel. Has a gated structure, the ends of the cylinder being occluded by the N-termini of the alpha-subunits. Is capped at one or both ends by the proteasome regulatory ATPase, PAN.

It localises to the cytoplasm. The formation of the proteasomal ATPase PAN-20S proteasome complex, via the docking of the C-termini of PAN into the intersubunit pockets in the alpha-rings, triggers opening of the gate for substrate entry. Interconversion between the open-gate and close-gate conformations leads to a dynamic regulation of the 20S proteasome proteolysis activity. Functionally, component of the proteasome core, a large protease complex with broad specificity involved in protein degradation. This is Proteasome subunit alpha from Methanosarcina mazei (strain ATCC BAA-159 / DSM 3647 / Goe1 / Go1 / JCM 11833 / OCM 88) (Methanosarcina frisia).